The chain runs to 279 residues: MRKGASNLNVSTAQRAAPMVSEAPIVMDCKLDKIFYGNFMAVRDSHVPIRKNEITGFIGPSGCGKSTVLRSLNRMNDLVKGFRFEGHVHFLGQDVYGKGVDPVVVRRYIGMVFQQPNPFSMSIFDNVAFGLRLNRYKGDLGDRVKHALQGAALWDEVKDKLKVSGLSLSGGQQQRLCIARAIATEPEVLLLDEPCSALDPIATRRVEELMVELKKDYTIALVTHNMQQAIRVADTTAFFSVDISQGTRTGYLVEMGPTAQIFQNPREQLTSDYISGKFS.

Residues 26–274 (VMDCKLDKIF…PREQLTSDYI (249 aa)) enclose the ABC transporter domain. 59-66 (GPSGCGKS) provides a ligand contact to ATP.

It belongs to the ABC transporter superfamily. Phosphate importer (TC 3.A.1.7) family. As to quaternary structure, the complex is composed of two ATP-binding proteins (PstB), two transmembrane proteins (PstC and PstA) and a solute-binding protein (PstS).

The protein localises to the cell inner membrane. The catalysed reaction is phosphate(out) + ATP + H2O = ADP + 2 phosphate(in) + H(+). Part of the ABC transporter complex PstSACB involved in phosphate import. Responsible for energy coupling to the transport system. The protein is Phosphate import ATP-binding protein PstB 1 of Pseudomonas putida (strain ATCC 47054 / DSM 6125 / CFBP 8728 / NCIMB 11950 / KT2440).